The sequence spans 511 residues: Cytochrome P450 705A5 (511 aa).

A helical transmembrane segment spans residues 12-30; sequence CFIFLLLCLFSRLSYDLFF. Cys-454 provides a ligand contact to heme.

This sequence belongs to the cytochrome P450 family. The cofactor is heme. As to expression, expressed primarily in the root epidermis.

It localises to the membrane. Functionally, converts thalian-diol to a desaturated thalian-diol. The chain is Cytochrome P450 705A5 (CYP705A5) from Arabidopsis thaliana (Mouse-ear cress).